The chain runs to 1839 residues: Mannuronan C5-epimerase AlgE3 (1839 aa).

8 PbH1 repeats span residues 133–155 (DRDV…DPHE), 157–179 (TINL…VADY), 180–202 (QVGG…NIVT), 204–226 (TNDF…VVQR), 257–279 (THDV…RVYG), 280–302 (AQDV…YAEV), 320–342 (TTGT…GIQE), and 347–369 (TDYS…RLYG). Residues 372 to 386 (STVSEQPSSGQQATL) show a composition bias toward polar residues. Positions 372 to 392 (STVSEQPSSGQQATLEGTAGN) are disordered. 9 Hemolysin-type calcium-binding repeats span residues 387–399 (EGTA…SGTG), 406–422 (GLAG…DDTL), 424–440 (GGAG…ADTF), 538–550 (TGTE…SGTD), 557–573 (GYGG…NDIL), 574–591 (VGGA…ADVF), 695–709 (EGTD…TGAD), 714–730 (GLGG…DDVL), and 732–748 (GGAE…ADTF). PbH1 repeat units lie at residues 975–997 (DRNV…DPHE), 999–1021 (TINL…VADY), 1022–1044 (LVDS…NVVT), 1046–1068 (TYDF…VIQR), 1099–1121 (TNNI…RLYG), 1122–1143 (TEDV…AYAE), 1161–1183 (TTGT…GIEE), and 1188–1210 (TDYS…RLNG). Residues 1215–1236 (VSDQPGTGQQATLEGTTGNDTL) show a composition bias toward polar residues. Residues 1215-1238 (VSDQPGTGQQATLEGTTGNDTLGG) form a disordered region. Hemolysin-type calcium-binding repeat units follow at residues 1229 to 1243 (GTTG…DAHE), 1247 to 1263 (GLDG…NDIL), 1265 to 1281 (GGVG…ADTF), 1398 to 1414 (GHAG…DDIL), 1415 to 1432 (VGGA…ADVF), 1536 to 1552 (EGTA…ADEV), 1554 to 1571 (HGGS…ADVF), 1670 to 1681 (GGDGNDTLSGGS), 1688 to 1704 (GGAG…NDIL), and 1706 to 1722 (GGAG…SDIF).

Belongs to the D-mannuronate C5-epimerase family. It depends on Ca(2+) as a cofactor.

The protein resides in the secreted. The catalysed reaction is [(1-&gt;4)-beta-D-mannuronosyl](n) = [alginate](n). The protein operates within glycan biosynthesis; alginate biosynthesis. Its activity is regulated as follows. Inhibited by zinc. Its function is as follows. Converts beta-D-mannuronic acid (M) to alpha-L-guluronic acid (G), producing a polymer with gel-forming capacity, required for the formation of the cyst coat. In Azotobacter vinelandii, this protein is Mannuronan C5-epimerase AlgE3.